The sequence spans 257 residues: Acetylglutamate kinase (257 aa).

Substrate contacts are provided by residues 43-44 (GG), R65, and N157.

The protein belongs to the acetylglutamate kinase family. ArgB subfamily.

Its subcellular location is the cytoplasm. The enzyme catalyses N-acetyl-L-glutamate + ATP = N-acetyl-L-glutamyl 5-phosphate + ADP. The protein operates within amino-acid biosynthesis; L-arginine biosynthesis; N(2)-acetyl-L-ornithine from L-glutamate: step 2/4. Catalyzes the ATP-dependent phosphorylation of N-acetyl-L-glutamate. This chain is Acetylglutamate kinase, found in Mannheimia succiniciproducens (strain KCTC 0769BP / MBEL55E).